The chain runs to 394 residues: Chorismate synthase (394 aa).

Positions 42 and 48 each coordinate NADP(+). Residues 137–139 (RAS), 258–259 (QA), Gly302, 317–321 (KPIAT), and Arg343 contribute to the FMN site.

Belongs to the chorismate synthase family. As to quaternary structure, homotetramer. Requires FMNH2 as cofactor.

It catalyses the reaction 5-O-(1-carboxyvinyl)-3-phosphoshikimate = chorismate + phosphate. It functions in the pathway metabolic intermediate biosynthesis; chorismate biosynthesis; chorismate from D-erythrose 4-phosphate and phosphoenolpyruvate: step 7/7. Its function is as follows. Catalyzes the anti-1,4-elimination of the C-3 phosphate and the C-6 proR hydrogen from 5-enolpyruvylshikimate-3-phosphate (EPSP) to yield chorismate, which is the branch point compound that serves as the starting substrate for the three terminal pathways of aromatic amino acid biosynthesis. This reaction introduces a second double bond into the aromatic ring system. This is Chorismate synthase from Streptomyces avermitilis (strain ATCC 31267 / DSM 46492 / JCM 5070 / NBRC 14893 / NCIMB 12804 / NRRL 8165 / MA-4680).